The primary structure comprises 71 residues: DNA gyrase inhibitor YacG (71 aa).

4 residues coordinate Zn(2+): Cys-9, Cys-12, Cys-28, and Cys-32. A disordered region spans residues 43–71 (EEKRIPSQSESNDSDEWSEMPEQDPKPFN). Over residues 54 to 64 (NDSDEWSEMPE) the composition is skewed to acidic residues.

Belongs to the DNA gyrase inhibitor YacG family. As to quaternary structure, interacts with GyrB. Zn(2+) is required as a cofactor.

In terms of biological role, inhibits all the catalytic activities of DNA gyrase by preventing its interaction with DNA. Acts by binding directly to the C-terminal domain of GyrB, which probably disrupts DNA binding by the gyrase. The sequence is that of DNA gyrase inhibitor YacG from Proteus mirabilis (strain HI4320).